Consider the following 101-residue polypeptide: Small ribosomal subunit protein uS14 (101 aa).

This sequence belongs to the universal ribosomal protein uS14 family. As to quaternary structure, part of the 30S ribosomal subunit. Contacts proteins S3 and S10.

In terms of biological role, binds 16S rRNA, required for the assembly of 30S particles and may also be responsible for determining the conformation of the 16S rRNA at the A site. In Pseudomonas putida (strain GB-1), this protein is Small ribosomal subunit protein uS14.